Reading from the N-terminus, the 155-residue chain is uncharacterized protein (155 aa).

The chain crosses the membrane as a helical span at residues 5 to 25; that stretch reads GIIICVGIAFLIFIFLWAYFK.

It localises to the membrane. This is an uncharacterized protein from Acheta domesticus (House cricket).